The sequence spans 122 residues: Large ribosomal subunit protein uL14 (122 aa).

The protein belongs to the universal ribosomal protein uL14 family. Part of the 50S ribosomal subunit. Forms a cluster with proteins L3 and L19. In the 70S ribosome, L14 and L19 interact and together make contacts with the 16S rRNA in bridges B5 and B8.

Its function is as follows. Binds to 23S rRNA. Forms part of two intersubunit bridges in the 70S ribosome. The polypeptide is Large ribosomal subunit protein uL14 (Shewanella amazonensis (strain ATCC BAA-1098 / SB2B)).